Here is an 83-residue protein sequence, read N- to C-terminus: Small ribosomal subunit protein bS16 (83 aa).

This sequence belongs to the bacterial ribosomal protein bS16 family.

This Pseudomonas putida (strain W619) protein is Small ribosomal subunit protein bS16.